Here is a 269-residue protein sequence, read N- to C-terminus: Ribonuclease HII (269 aa).

In terms of domain architecture, RNase H type-2 spans 28 to 222 (RHVAGADEAG…VSGRRGAPPR (195 aa)). Residues D34, E35, and D128 each coordinate a divalent metal cation.

Belongs to the RNase HII family. Requires Mn(2+) as cofactor. The cofactor is Mg(2+).

It localises to the cytoplasm. It carries out the reaction Endonucleolytic cleavage to 5'-phosphomonoester.. Endonuclease that specifically degrades the RNA of RNA-DNA hybrids. This Salinispora arenicola (strain CNS-205) protein is Ribonuclease HII.